Consider the following 451-residue polypeptide: Phosphoglucosamine mutase (451 aa).

Ser101 serves as the catalytic Phosphoserine intermediate. Residues Ser101, Asp243, Asp245, and Asp247 each contribute to the Mg(2+) site. Phosphoserine is present on Ser101.

It belongs to the phosphohexose mutase family. It depends on Mg(2+) as a cofactor. Activated by phosphorylation.

The catalysed reaction is alpha-D-glucosamine 1-phosphate = D-glucosamine 6-phosphate. Functionally, catalyzes the conversion of glucosamine-6-phosphate to glucosamine-1-phosphate. The sequence is that of Phosphoglucosamine mutase from Thermodesulfovibrio yellowstonii (strain ATCC 51303 / DSM 11347 / YP87).